The primary structure comprises 230 residues: 7-cyano-7-deazaguanine synthase (230 aa).

Residue 8–18 (LSGGMDSAVVT) participates in ATP binding. Zn(2+) is bound by residues C186, C196, C199, and C202.

This sequence belongs to the QueC family. It depends on Zn(2+) as a cofactor.

The catalysed reaction is 7-carboxy-7-deazaguanine + NH4(+) + ATP = 7-cyano-7-deazaguanine + ADP + phosphate + H2O + H(+). It participates in purine metabolism; 7-cyano-7-deazaguanine biosynthesis. Its function is as follows. Catalyzes the ATP-dependent conversion of 7-carboxy-7-deazaguanine (CDG) to 7-cyano-7-deazaguanine (preQ(0)). The chain is 7-cyano-7-deazaguanine synthase from Xylella fastidiosa (strain 9a5c).